Here is an 887-residue protein sequence, read N- to C-terminus: Tiger protein O1 (887 aa).

The N-terminal stretch at methionine 1–cysteine 21 is a signal peptide. Residues arginine 22–leucine 845 are Extracellular-facing. Asparagine 32, asparagine 70, asparagine 186, asparagine 207, asparagine 219, asparagine 259, asparagine 297, asparagine 314, asparagine 325, asparagine 338, asparagine 354, asparagine 393, asparagine 431, asparagine 588, asparagine 629, asparagine 652, asparagine 687, asparagine 710, asparagine 720, asparagine 730, asparagine 775, asparagine 788, asparagine 811, and asparagine 816 each carry an N-linked (GlcNAc...) asparagine glycan. An IPT/TIG 1 domain is found at asparagine 277–tyrosine 365. The 58-residue stretch at asparagine 710 to phenylalanine 767 folds into the IPT/TIG 2 domain. The interval asparagine 811 to serine 835 is disordered. Residues serine 846–isoleucine 866 form a helical membrane-spanning segment. Residues lysine 867–glutamine 887 lie on the Cytoplasmic side of the membrane.

The protein localises to the membrane. The protein is Tiger protein O1 (tgrO1) of Dictyostelium discoideum (Social amoeba).